The primary structure comprises 188 residues: Large ribosomal subunit protein eL18z (188 aa).

This sequence belongs to the eukaryotic ribosomal protein eL18 family.

This is Large ribosomal subunit protein eL18z (RPL18A) from Arabidopsis thaliana (Mouse-ear cress).